Reading from the N-terminus, the 126-residue chain is UPF0102 protein BH12350 (126 aa).

It belongs to the UPF0102 family.

The polypeptide is UPF0102 protein BH12350 (Bartonella henselae (strain ATCC 49882 / DSM 28221 / CCUG 30454 / Houston 1) (Rochalimaea henselae)).